Consider the following 450-residue polypeptide: tRNA-aminoacylation cofactor arc1 (450 aa).

Positions 208–278 (QRPSVIKKDK…KEPPKAATPV (71 aa)) are disordered. Composition is skewed to basic and acidic residues over residues 213–225 (IKKD…EGKP) and 233–247 (SVEK…AKKE). Over residues 248–261 (KQNKKEKKDKKDKK) the composition is skewed to basic residues. The segment covering 262–272 (DKKEKAPKEPP) has biased composition (basic and acidic residues). Positions 278 to 382 (VPSMIDFRIG…ENAEIGDRLT (105 aa)) constitute a tRNA-binding domain.

This sequence belongs to the tRNA-aminoacylation cofactor ARC1 family. As to quaternary structure, component of a yeast aminoacyl-tRNA synthase (aaRS) complex formed by methionyl-tRNA synthase, glutamyl-tRNA synthase and the tRNA aminoacylation cofactor arc1 in a stoichiometric complex. Interacts with rar1/mes1 and gus1.

It localises to the cytoplasm. Its function is as follows. Binds to tRNA and functions as a cofactor for the methionyl-tRNA synthetase (MetRS) and glutamyl-tRNA synthetase (GluRS). Forms a complex with MetRS and GluRS and increases their affinity for cognate tRNAs due to the presence of a tRNA binding domain in its middle and C-terminal part. The polypeptide is tRNA-aminoacylation cofactor arc1 (Schizosaccharomyces pombe (strain 972 / ATCC 24843) (Fission yeast)).